The sequence spans 339 residues: tRNA pseudouridine synthase D (339 aa).

The active-site Nucleophile is Asp-80. The TRUD domain maps to Gly-155–Pro-311.

This sequence belongs to the pseudouridine synthase TruD family.

It catalyses the reaction uridine(13) in tRNA = pseudouridine(13) in tRNA. Responsible for synthesis of pseudouridine from uracil-13 in transfer RNAs. This chain is tRNA pseudouridine synthase D, found in Haemophilus influenzae (strain 86-028NP).